Here is a 78-residue protein sequence, read N- to C-terminus: RNA-binding protein Hfq (78 aa).

The region spanning 10–69 is the Sm domain; it reads DPFLNALRREHVPVSIYLVNGIKLQGQVESFDQYVVLLKNTVTQMVYKHAISTVVPARPV.

This sequence belongs to the Hfq family. In terms of assembly, homohexamer.

In terms of biological role, RNA chaperone that binds small regulatory RNA (sRNAs) and mRNAs to facilitate mRNA translational regulation in response to envelope stress, environmental stress and changes in metabolite concentrations. Also binds with high specificity to tRNAs. The polypeptide is RNA-binding protein Hfq (Dechloromonas aromatica (strain RCB)).